The chain runs to 1099 residues: Protein DDB_G0287365 (1099 aa).

Positions 1-24 are cleaved as a signal peptide; the sequence is MMSFNLILILIIFLILIQNYVIDG. A G8 domain is found at 47–174; that stretch reads KSWKKLKLPI…TKTTWTKLIS (128 aa). 5 N-linked (GlcNAc...) asparagine glycosylation sites follow: asparagine 62, asparagine 137, asparagine 664, asparagine 764, and asparagine 858.

This sequence belongs to the CEMIP family.

This Dictyostelium discoideum (Social amoeba) protein is Protein DDB_G0287365.